Here is a 501-residue protein sequence, read N- to C-terminus: GDP-fucose protein O-fucosyltransferase 4 (501 aa).

Residues methionine 1 to lysine 10 are Cytoplasmic-facing. The helical; Signal-anchor for type II membrane protein transmembrane segment at methionine 11–alanine 31 threads the bilayer. The Lumenal portion of the chain corresponds to serine 32 to asparagine 501. The N-linked (GlcNAc...) asparagine glycan is linked to asparagine 173. Cysteines 396 and 399 form a disulfide. N-linked (GlcNAc...) asparagine glycosylation is found at asparagine 428 and asparagine 478.

The protein belongs to the glycosyltransferase 10 family.

It is found in the endoplasmic reticulum membrane. It catalyses the reaction L-threonyl-[protein] + GDP-beta-L-fucose = 3-O-(alpha-L-fucosyl)-L-threonyl-[protein] + GDP + H(+). It carries out the reaction L-seryl-[protein] + GDP-beta-L-fucose = 3-O-(alpha-L-fucosyl)-L-seryl-[protein] + GDP + H(+). The protein operates within protein modification; protein glycosylation. In terms of biological role, protein O-fucosyltransferase that specifically catalyzes O-fucosylation of serine or threonine residues in EMI domains of target proteins. Attaches fucose through an O-glycosidic linkage. O-fucosylation of EMI domain-containing proteins may be required for facilitating protein folding and secretion. The protein is GDP-fucose protein O-fucosyltransferase 4 (fut11) of Takifugu rubripes (Japanese pufferfish).